Reading from the N-terminus, the 62-residue chain is Large ribosomal subunit protein uL29 (62 aa).

Belongs to the universal ribosomal protein uL29 family.

The chain is Large ribosomal subunit protein uL29 from Acholeplasma laidlawii (strain PG-8A).